A 911-amino-acid polypeptide reads, in one-letter code: Transferrin-binding protein A (911 aa).

The first 24 residues, 1 to 24, serve as a signal peptide directing secretion; the sequence is MQQQHLFRLNILCLSLMTALPAYA. The TonB box motif lies at 38–45; it reads DTIQVKAK. The TBDR plug domain occupies 51–176; sequence RDNEVTGLGK…LAGSVAFQTK (126 aa). The region spanning 187–911 is the TBDR beta-barrel domain; it reads QWGIQSKTAY…NYTFSLEMKF (725 aa). A TonB C-terminal box motif is present at residues 894 to 911; sequence NRYAAPGRNYTFSLEMKF.

It belongs to the TonB-dependent receptor family. As to quaternary structure, binds both human apo- and holo-transferrin (TF), via the TF C-terminus. Forms a large complex with TF and TbpB.

The protein localises to the cell outer membrane. Neisseria acquires iron by extracting it from serum transferrin (TF) in its human host. Acts as a TF receptor and is required for TF utilization. Binds both apo- and holo-TF, via the TF C-terminus. This chain is Transferrin-binding protein A, found in Neisseria meningitidis serogroup B.